A 1576-amino-acid chain; its full sequence is DExH-box ATP-dependent RNA helicase DExH2 (1576 aa).

One can recognise an R3H domain in the interval 15–78 (EATGAWATKV…ERRLSLFKGD (64 aa)). The Helicase ATP-binding domain occupies 227–396 (ISAVESNQVV…FGGCPVVRVP (170 aa)). 240 to 247 (GETGCGKT) is a binding site for ATP. The DEIH box motif lies at 343–346 (DEIH). In terms of domain architecture, Helicase C-terminal spans 561-735 (LIVKLMKKIC…ELCLQVKMLD (175 aa)). Disordered regions lie at residues 1137–1165 (ATSPRDDIPSTNPNELREHDPNTTPMGSK), 1177–1223 (MEES…SLNN), and 1260–1576 (DMGN…PSDQ). The span at 1281–1301 (PNSANSMDLGNMEENTPSDLA) shows a compositional bias: polar residues. Residues 1305-1319 (KKKEPKSVSKLDLGS) are compositionally biased toward basic and acidic residues. The PH1 motif lies at 1349-1360 (KQPEKKRSRSKK). Basic residues predominate over residues 1352-1363 (EKKRSRSKKRKS). Positions 1381–1412 (ANENEQTEPKSANNLDLGNMKENTPSDLANEN) are enriched in polar residues. The PH2 motif lies at 1454 to 1465 (KQPKKKRSRSKK). Basic residues predominate over residues 1455–1467 (QPKKKRSRSKKCK). Positions 1490–1508 (EQKDPESVNRLDPGKEKES) are enriched in basic and acidic residues. Residues 1509 to 1524 (IPSNLVSGNEQPDSNT) are compositionally biased toward polar residues. Positions 1528–1537 (KKPKKKKRKL) are enriched in basic residues. The short motif at 1530-1537 (PKKKKRKL) is the Nuclear localization signal element. Polar residues predominate over residues 1540–1562 (NFDSVNNMEEKMPSTNVLSQGNK).

The protein belongs to the DExH box helicase family. In terms of assembly, homodimer.

Its subcellular location is the nucleus. It carries out the reaction ATP + H2O = ADP + phosphate + H(+). Its function is as follows. May function as an ATP-dependent RNA/DNA helicase. Binds DNA in vitro in a non-specific manner. The protein is DExH-box ATP-dependent RNA helicase DExH2 of Arabidopsis thaliana (Mouse-ear cress).